Here is a 248-residue protein sequence, read N- to C-terminus: 3-deoxy-manno-octulosonate cytidylyltransferase (248 aa).

The protein belongs to the KdsB family.

Its subcellular location is the cytoplasm. It catalyses the reaction 3-deoxy-alpha-D-manno-oct-2-ulosonate + CTP = CMP-3-deoxy-beta-D-manno-octulosonate + diphosphate. Its pathway is nucleotide-sugar biosynthesis; CMP-3-deoxy-D-manno-octulosonate biosynthesis; CMP-3-deoxy-D-manno-octulosonate from 3-deoxy-D-manno-octulosonate and CTP: step 1/1. The protein operates within bacterial outer membrane biogenesis; lipopolysaccharide biosynthesis. In terms of biological role, activates KDO (a required 8-carbon sugar) for incorporation into bacterial lipopolysaccharide in Gram-negative bacteria. This is 3-deoxy-manno-octulosonate cytidylyltransferase from Citrobacter koseri (strain ATCC BAA-895 / CDC 4225-83 / SGSC4696).